A 78-amino-acid chain; its full sequence is Structural DNA-binding protein p10 (78 aa).

Residues 1 to 24 (MPTKAGTKSTANKKTTKGSSKSGS) show a composition bias toward low complexity. The tract at residues 1–41 (MPTKAGTKSTANKKTTKGSSKSGSPRGHTGKTHAPPSMHSG) is disordered.

Belongs to the asfivirus P10 family.

The protein resides in the virion. May play a role in genome packaging through direct interaction with viral DNA. Binds to ssDNA and dsDNA with the same apparent affinity in vitro. This chain is Structural DNA-binding protein p10, found in African swine fever virus (isolate Tick/South Africa/Pretoriuskop Pr4/1996) (ASFV).